A 446-amino-acid chain; its full sequence is Phosphoglucosamine mutase (446 aa).

The active-site Phosphoserine intermediate is the S101. Residues S101, D240, D242, and D244 each contribute to the Mg(2+) site. Position 101 is a phosphoserine (S101).

The protein belongs to the phosphohexose mutase family. Requires Mg(2+) as cofactor. Post-translationally, activated by phosphorylation.

It carries out the reaction alpha-D-glucosamine 1-phosphate = D-glucosamine 6-phosphate. Its function is as follows. Catalyzes the conversion of glucosamine-6-phosphate to glucosamine-1-phosphate. This chain is Phosphoglucosamine mutase, found in Coxiella burnetii (strain CbuK_Q154) (Coxiella burnetii (strain Q154)).